A 501-amino-acid chain; its full sequence is Glutamate--tRNA ligase (501 aa).

The 'HIGH' region signature appears at 11–21 (PSPTGFLHIGN). The 'KMSKS' region signature appears at 257–261 (KLSKR). Position 260 (Lys-260) interacts with ATP.

This sequence belongs to the class-I aminoacyl-tRNA synthetase family. Glutamate--tRNA ligase type 1 subfamily. Monomer.

It localises to the cytoplasm. It carries out the reaction tRNA(Glu) + L-glutamate + ATP = L-glutamyl-tRNA(Glu) + AMP + diphosphate. In terms of biological role, catalyzes the attachment of glutamate to tRNA(Glu) in a two-step reaction: glutamate is first activated by ATP to form Glu-AMP and then transferred to the acceptor end of tRNA(Glu). The polypeptide is Glutamate--tRNA ligase (Limosilactobacillus reuteri subsp. reuteri (strain JCM 1112) (Lactobacillus reuteri)).